We begin with the raw amino-acid sequence, 68 residues long: Putative alpha-conotoxin Qc alphaL-1 (68 aa).

The signal sequence occupies residues 1-21 (MGMRMMFTMFLLVVLATTVVS). Positions 22 to 49 (INLDHAFDGRNAAANNKATDLMARTVRR) are excised as a propeptide. The cysteines at positions 51 and 64 are disulfide-linked.

This sequence belongs to the conotoxin A superfamily. In terms of tissue distribution, expressed by the venom duct.

Its subcellular location is the secreted. In terms of biological role, alpha-conotoxins act on postsynaptic membranes, they bind to the nicotinic acetylcholine receptors (nAChR) and thus inhibit them. This is Putative alpha-conotoxin Qc alphaL-1 from Conus quercinus (Oak cone).